The sequence spans 244 residues: Aspartate/glutamate leucyltransferase (244 aa).

The protein belongs to the R-transferase family. Bpt subfamily.

It localises to the cytoplasm. It carries out the reaction N-terminal L-glutamyl-[protein] + L-leucyl-tRNA(Leu) = N-terminal L-leucyl-L-glutamyl-[protein] + tRNA(Leu) + H(+). The catalysed reaction is N-terminal L-aspartyl-[protein] + L-leucyl-tRNA(Leu) = N-terminal L-leucyl-L-aspartyl-[protein] + tRNA(Leu) + H(+). Functions in the N-end rule pathway of protein degradation where it conjugates Leu from its aminoacyl-tRNA to the N-termini of proteins containing an N-terminal aspartate or glutamate. In Bordetella bronchiseptica (strain ATCC BAA-588 / NCTC 13252 / RB50) (Alcaligenes bronchisepticus), this protein is Aspartate/glutamate leucyltransferase.